The following is a 278-amino-acid chain: Release factor glutamine methyltransferase (278 aa).

S-adenosyl-L-methionine contacts are provided by residues 117-121 (GTGSG), Asp140, and Asn184. Residue 184-187 (NPPY) coordinates substrate.

The protein belongs to the protein N5-glutamine methyltransferase family. PrmC subfamily.

It carries out the reaction L-glutaminyl-[peptide chain release factor] + S-adenosyl-L-methionine = N(5)-methyl-L-glutaminyl-[peptide chain release factor] + S-adenosyl-L-homocysteine + H(+). Its function is as follows. Methylates the class 1 translation termination release factors RF1/PrfA and RF2/PrfB on the glutamine residue of the universally conserved GGQ motif. The sequence is that of Release factor glutamine methyltransferase from Staphylococcus aureus (strain NCTC 8325 / PS 47).